The chain runs to 233 residues: 5'-methylthioadenosine/S-adenosylhomocysteine nucleosidase (233 aa).

The Proton acceptor role is filled by Glu12. Residues Gly78, Ile153, and 174–175 (ME) each bind substrate. Catalysis depends on Asp198, which acts as the Proton donor.

It belongs to the PNP/UDP phosphorylase family. MtnN subfamily.

The enzyme catalyses S-adenosyl-L-homocysteine + H2O = S-(5-deoxy-D-ribos-5-yl)-L-homocysteine + adenine. It carries out the reaction S-methyl-5'-thioadenosine + H2O = 5-(methylsulfanyl)-D-ribose + adenine. The catalysed reaction is 5'-deoxyadenosine + H2O = 5-deoxy-D-ribose + adenine. It participates in amino-acid biosynthesis; L-methionine biosynthesis via salvage pathway; S-methyl-5-thio-alpha-D-ribose 1-phosphate from S-methyl-5'-thioadenosine (hydrolase route): step 1/2. Functionally, catalyzes the irreversible cleavage of the glycosidic bond in both 5'-methylthioadenosine (MTA) and S-adenosylhomocysteine (SAH/AdoHcy) to adenine and the corresponding thioribose, 5'-methylthioribose and S-ribosylhomocysteine, respectively. Also cleaves 5'-deoxyadenosine, a toxic by-product of radical S-adenosylmethionine (SAM) enzymes, into 5-deoxyribose and adenine. The polypeptide is 5'-methylthioadenosine/S-adenosylhomocysteine nucleosidase (Exiguobacterium sp. (strain ATCC BAA-1283 / AT1b)).